Here is a 455-residue protein sequence, read N- to C-terminus: Bleomycin hydrolase (455 aa).

Position 1 is an N-acetylmethionine (methionine 1). Active-site residues include cysteine 73 and histidine 372. Lysine 391 carries the N6-acetyllysine modification. Asparagine 396 is a catalytic residue.

It belongs to the peptidase C1 family. As to quaternary structure, homohexamer. Interacts with NUDT12 (via ANK repeats).

It localises to the cytoplasm. It is found in the cytoplasmic granule. It catalyses the reaction Inactivates bleomycin B2 (a cytotoxic glycometallopeptide) by hydrolysis of a carboxyamide bond of beta-aminoalanine, but also shows general aminopeptidase activity. The specificity varies somewhat with source, but amino acid arylamides of Met, Leu and Ala are preferred.. Its function is as follows. The normal physiological role of BLM hydrolase is unknown, but it catalyzes the inactivation of the antitumor drug BLM (a glycopeptide) by hydrolyzing the carboxamide bond of its B-aminoalaninamide moiety thus protecting normal and malignant cells from BLM toxicity. The protein is Bleomycin hydrolase (Blmh) of Mus musculus (Mouse).